Consider the following 509-residue polypeptide: Pyruvate kinase (509 aa).

Phosphoserine is present on Ser29. Arg56 is a substrate binding site. Positions 58 and 60 each coordinate K(+). Asn58–His61 contributes to the ATP binding site. Ser63 carries the phosphoserine modification. Asp91 and Thr92 together coordinate K(+). ATP-binding residues include Arg98 and Lys184. Glu249 serves as a coordination point for Mg(2+). 2 residues coordinate substrate: Gly272 and Asp273. Asp273 is a binding site for Mg(2+). Ser281 is subject to Phosphoserine. Thr305 is a substrate binding site. Ser412 carries the post-translational modification Phosphoserine.

It belongs to the pyruvate kinase family. In terms of assembly, homotetramer. Requires Mg(2+) as cofactor. It depends on K(+) as a cofactor.

It carries out the reaction pyruvate + ATP = phosphoenolpyruvate + ADP + H(+). It functions in the pathway carbohydrate degradation; glycolysis; pyruvate from D-glyceraldehyde 3-phosphate: step 5/5. The polypeptide is Pyruvate kinase (pyk1) (Schizosaccharomyces pombe (strain 972 / ATCC 24843) (Fission yeast)).